We begin with the raw amino-acid sequence, 291 residues long: 4-hydroxy-tetrahydrodipicolinate synthase (291 aa).

Thr-44 provides a ligand contact to pyruvate. Catalysis depends on Tyr-132, which acts as the Proton donor/acceptor. The active-site Schiff-base intermediate with substrate is Lys-161. Residue Ile-202 participates in pyruvate binding.

The protein belongs to the DapA family. Homotetramer; dimer of dimers.

The protein localises to the cytoplasm. It carries out the reaction L-aspartate 4-semialdehyde + pyruvate = (2S,4S)-4-hydroxy-2,3,4,5-tetrahydrodipicolinate + H2O + H(+). The protein operates within amino-acid biosynthesis; L-lysine biosynthesis via DAP pathway; (S)-tetrahydrodipicolinate from L-aspartate: step 3/4. Catalyzes the condensation of (S)-aspartate-beta-semialdehyde [(S)-ASA] and pyruvate to 4-hydroxy-tetrahydrodipicolinate (HTPA). The chain is 4-hydroxy-tetrahydrodipicolinate synthase from Endomicrobium trichonymphae.